A 133-amino-acid chain; its full sequence is Holo-[acyl-carrier-protein] synthase (133 aa).

The Mg(2+) site is built by Asp8 and Glu57.

Belongs to the P-Pant transferase superfamily. AcpS family. Requires Mg(2+) as cofactor.

The protein resides in the cytoplasm. It catalyses the reaction apo-[ACP] + CoA = holo-[ACP] + adenosine 3',5'-bisphosphate + H(+). Its function is as follows. Transfers the 4'-phosphopantetheine moiety from coenzyme A to a Ser of acyl-carrier-protein. In Bartonella quintana (strain Toulouse) (Rochalimaea quintana), this protein is Holo-[acyl-carrier-protein] synthase.